A 366-amino-acid chain; its full sequence is Beta sliding clamp (366 aa).

This sequence belongs to the beta sliding clamp family. As to quaternary structure, forms a ring-shaped head-to-tail homodimer around DNA which binds and tethers DNA polymerases and other proteins to the DNA. The DNA replisome complex has a single clamp-loading complex (3 tau and 1 each of delta, delta', psi and chi subunits) which binds 3 Pol III cores (1 core on the leading strand and 2 on the lagging strand) each with a beta sliding clamp dimer. Additional proteins in the replisome are other copies of gamma, psi and chi, Ssb, DNA helicase and RNA primase.

The protein resides in the cytoplasm. Its function is as follows. Confers DNA tethering and processivity to DNA polymerases and other proteins. Acts as a clamp, forming a ring around DNA (a reaction catalyzed by the clamp-loading complex) which diffuses in an ATP-independent manner freely and bidirectionally along dsDNA. Initially characterized for its ability to contact the catalytic subunit of DNA polymerase III (Pol III), a complex, multichain enzyme responsible for most of the replicative synthesis in bacteria; Pol III exhibits 3'-5' exonuclease proofreading activity. The beta chain is required for initiation of replication as well as for processivity of DNA replication. The polypeptide is Beta sliding clamp (dnaN) (Chlamydia muridarum (strain MoPn / Nigg)).